We begin with the raw amino-acid sequence, 229 residues long: Orotidine 5'-phosphate decarboxylase (229 aa).

Substrate contacts are provided by residues aspartate 10, lysine 32, aspartate 59 to threonine 68, threonine 119, arginine 180, glutamine 189, glycine 209, and arginine 210. Lysine 61 acts as the Proton donor in catalysis.

This sequence belongs to the OMP decarboxylase family. Type 1 subfamily. As to quaternary structure, homodimer.

The enzyme catalyses orotidine 5'-phosphate + H(+) = UMP + CO2. Its pathway is pyrimidine metabolism; UMP biosynthesis via de novo pathway; UMP from orotate: step 2/2. Catalyzes the decarboxylation of orotidine 5'-monophosphate (OMP) to uridine 5'-monophosphate (UMP). The sequence is that of Orotidine 5'-phosphate decarboxylase from Legionella pneumophila subsp. pneumophila (strain Philadelphia 1 / ATCC 33152 / DSM 7513).